The following is a 336-amino-acid chain: MSRPSLTRFLIEEQHAGRIDAELRQLITIVSRACKRISIAVSKGALGGVLGDAGTGNVQGEAQKKLDVLSNDILLEANAWGGHLAACASEEMDHSQPVPEQYPSGDFLLLFDPLDGSSNIDVNVSVGTIFSVLRAPKGTEKPGDEHFLQPGTQQVAAGYCIYGPSTMLVLTLGHGTHAFTLEREEGSFLLTQANMRVPDETAEYAINMSNQRHWEPAMQAYVGDLLAGKDGARGKDFNMRWIASMVADVHRILTRGGIFIYPWDKKDPSKPGKLRLMYEANPMSMLVEQAGGAATTGRERILDIQPTQLHQRVPVFLGSKNEVAAATRYHLDADKA.

Residues Glu90, Asp112, Leu114, and Asp115 each coordinate Mg(2+). Substrate-binding positions include 115–118, Asn207, and Lys273; that span reads DGSS. Glu279 is a binding site for Mg(2+).

The protein belongs to the FBPase class 1 family. In terms of assembly, homotetramer. It depends on Mg(2+) as a cofactor.

It is found in the cytoplasm. The enzyme catalyses beta-D-fructose 1,6-bisphosphate + H2O = beta-D-fructose 6-phosphate + phosphate. It functions in the pathway carbohydrate biosynthesis; gluconeogenesis. This is Fructose-1,6-bisphosphatase class 1 from Xanthomonas oryzae pv. oryzae (strain PXO99A).